We begin with the raw amino-acid sequence, 298 residues long: Glutamyl-Q tRNA(Asp) synthetase (298 aa).

Residues 9-13 (RFAPS) and Glu45 each bind L-glutamate. The short motif at 12 to 22 (PSPSGELHFGS) is the 'HIGH' region element. 4 residues coordinate Zn(2+): Cys101, Cys103, Tyr115, and Cys119. Residues Tyr172 and Arg190 each contribute to the L-glutamate site. The short motif at 228-232 (KLSKQ) is the 'KMSKS' region element. Position 231 (Lys231) interacts with ATP.

This sequence belongs to the class-I aminoacyl-tRNA synthetase family. GluQ subfamily. Requires Zn(2+) as cofactor.

Catalyzes the tRNA-independent activation of glutamate in presence of ATP and the subsequent transfer of glutamate onto a tRNA(Asp). Glutamate is transferred on the 2-amino-5-(4,5-dihydroxy-2-cyclopenten-1-yl) moiety of the queuosine in the wobble position of the QUC anticodon. This chain is Glutamyl-Q tRNA(Asp) synthetase, found in Salmonella paratyphi A (strain ATCC 9150 / SARB42).